The following is a 142-amino-acid chain: Large ribosomal subunit protein uL13 (142 aa).

The protein belongs to the universal ribosomal protein uL13 family. Part of the 50S ribosomal subunit.

In terms of biological role, this protein is one of the early assembly proteins of the 50S ribosomal subunit, although it is not seen to bind rRNA by itself. It is important during the early stages of 50S assembly. The sequence is that of Large ribosomal subunit protein uL13 from Shigella sonnei (strain Ss046).